The chain runs to 219 residues: ATP-dependent dethiobiotin synthetase BioD (219 aa).

12 to 17 (DLGKTH) serves as a coordination point for ATP. Mg(2+) is bound at residue Thr16. The active site involves Lys37. A substrate-binding site is contributed by Ser41. Residues Asp52, 115 to 118 (EGAG), and 175 to 176 (SE) each bind ATP. Mg(2+)-binding residues include Asp52 and Glu115.

It belongs to the dethiobiotin synthetase family. In terms of assembly, homodimer. It depends on Mg(2+) as a cofactor.

It is found in the cytoplasm. It catalyses the reaction (7R,8S)-7,8-diammoniononanoate + CO2 + ATP = (4R,5S)-dethiobiotin + ADP + phosphate + 3 H(+). The protein operates within cofactor biosynthesis; biotin biosynthesis; biotin from 7,8-diaminononanoate: step 1/2. Its function is as follows. Catalyzes a mechanistically unusual reaction, the ATP-dependent insertion of CO2 between the N7 and N8 nitrogen atoms of 7,8-diaminopelargonic acid (DAPA, also called 7,8-diammoniononanoate) to form a ureido ring. This Caulobacter vibrioides (strain ATCC 19089 / CIP 103742 / CB 15) (Caulobacter crescentus) protein is ATP-dependent dethiobiotin synthetase BioD.